The following is a 418-amino-acid chain: Thermolabile hemolysin (418 aa).

An N-terminal signal peptide occupies residues 1-19 (MMKKTITLLTALLPLASAV). The active-site Nucleophile is Ser153. Catalysis depends on residues Asp390 and His393.

It belongs to the 'GDSL' lipolytic enzyme family. Post-translationally, there are two forms of LDH. The LDH(S) may be a protein in which 13 residues of the N-terminal of LDH(L) are deleted.

It localises to the secreted. Functionally, phospholipase hydrolyzing both fatty acid esters of phospholipid, i.e. it hydrolyzes phosphatidylcholine (PC) to lysophosphatidylcholine (LPC) and then LPC to glycerophosphorylcholine (GPC). This Vibrio parahaemolyticus serotype O3:K6 (strain RIMD 2210633) protein is Thermolabile hemolysin.